We begin with the raw amino-acid sequence, 318 residues long: 1-aminocyclopropane-1-carboxylate oxidase (318 aa).

The region spanning 151–251 is the Fe2OG dioxygenase domain; that stretch reads PTFGTKVSNY…RMSIASFYNP (101 aa). Fe cation is bound by residues H175, D177, and H232.

Belongs to the iron/ascorbate-dependent oxidoreductase family. It depends on Fe cation as a cofactor.

It carries out the reaction 1-aminocyclopropane-1-carboxylate + L-ascorbate + O2 = ethene + L-dehydroascorbate + hydrogen cyanide + CO2 + 2 H2O. It participates in alkene biosynthesis; ethylene biosynthesis via S-adenosyl-L-methionine; ethylene from S-adenosyl-L-methionine: step 2/2. The chain is 1-aminocyclopropane-1-carboxylate oxidase (ACO) from Dendrobium crumenatum (Tropical pigeon orchid).